The sequence spans 211 residues: Thiamine-phosphate synthase (211 aa).

Residues 37–41 (QLRIK) and Asn69 contribute to the 4-amino-2-methyl-5-(diphosphooxymethyl)pyrimidine site. Mg(2+) is bound by residues Asp70 and Asp89. Ser108 is a 4-amino-2-methyl-5-(diphosphooxymethyl)pyrimidine binding site. 134-136 (TQT) contacts 2-[(2R,5Z)-2-carboxy-4-methylthiazol-5(2H)-ylidene]ethyl phosphate. Position 137 (Lys137) interacts with 4-amino-2-methyl-5-(diphosphooxymethyl)pyrimidine. 2-[(2R,5Z)-2-carboxy-4-methylthiazol-5(2H)-ylidene]ethyl phosphate contacts are provided by residues Gly166 and 186–187 (VS).

Belongs to the thiamine-phosphate synthase family. It depends on Mg(2+) as a cofactor.

The enzyme catalyses 2-[(2R,5Z)-2-carboxy-4-methylthiazol-5(2H)-ylidene]ethyl phosphate + 4-amino-2-methyl-5-(diphosphooxymethyl)pyrimidine + 2 H(+) = thiamine phosphate + CO2 + diphosphate. It carries out the reaction 2-(2-carboxy-4-methylthiazol-5-yl)ethyl phosphate + 4-amino-2-methyl-5-(diphosphooxymethyl)pyrimidine + 2 H(+) = thiamine phosphate + CO2 + diphosphate. It catalyses the reaction 4-methyl-5-(2-phosphooxyethyl)-thiazole + 4-amino-2-methyl-5-(diphosphooxymethyl)pyrimidine + H(+) = thiamine phosphate + diphosphate. The protein operates within cofactor biosynthesis; thiamine diphosphate biosynthesis; thiamine phosphate from 4-amino-2-methyl-5-diphosphomethylpyrimidine and 4-methyl-5-(2-phosphoethyl)-thiazole: step 1/1. Its function is as follows. Condenses 4-methyl-5-(beta-hydroxyethyl)thiazole monophosphate (THZ-P) and 2-methyl-4-amino-5-hydroxymethyl pyrimidine pyrophosphate (HMP-PP) to form thiamine monophosphate (TMP). This is Thiamine-phosphate synthase from Escherichia coli O139:H28 (strain E24377A / ETEC).